A 283-amino-acid polypeptide reads, in one-letter code: MASGTTTTAVKIGIIGGTGLDDPEILEGRTEKYVDTPFGKPSDALILGKIKNVDCVLLARHGRQHTIMPSKVNYQANIWALKEEGCTHVIVTTACGSLREEIQPGDIVIIDQFIDRTTMRPQSFYDGSHSCARGVCHIPMAEPFCPKTREVLIETAKKLGLRCHSKGTMVTIEGPRFSSRAESFMFRTWGADVINMTTVPEVVLAKEAGICYASIAMATDYDCWKEHEEAVSVDRVLKTLKENANKAKSLLLTTIPQIGSTEWSETLHNLKNMAQFSVLLPRH.

Residue Thr18 coordinates phosphate. Residue Lys51 is modified to N6-acetyllysine. Residues 60 to 61 (RH) and 93 to 94 (TA) contribute to the phosphate site. Met196 contacts substrate. Position 197 (Thr197) interacts with phosphate. 220-222 (DYD) provides a ligand contact to substrate.

Belongs to the PNP/MTAP phosphorylase family. MTAP subfamily. As to quaternary structure, homotrimer. Ubiquitously expressed.

It localises to the cytoplasm. It is found in the nucleus. The enzyme catalyses S-methyl-5'-thioadenosine + phosphate = 5-(methylsulfanyl)-alpha-D-ribose 1-phosphate + adenine. Its pathway is amino-acid biosynthesis; L-methionine biosynthesis via salvage pathway; S-methyl-5-thio-alpha-D-ribose 1-phosphate from S-methyl-5'-thioadenosine (phosphorylase route): step 1/1. Its activity is regulated as follows. Inhibited by 5'-methylthiotubercin and 5'-chloroformycin. In terms of biological role, catalyzes the reversible phosphorylation of S-methyl-5'-thioadenosine (MTA) to adenine and 5-methylthioribose-1-phosphate. Involved in the breakdown of MTA, a major by-product of polyamine biosynthesis. Responsible for the first step in the methionine salvage pathway after MTA has been generated from S-adenosylmethionine. Has broad substrate specificity with 6-aminopurine nucleosides as preferred substrates. The sequence is that of S-methyl-5'-thioadenosine phosphorylase from Homo sapiens (Human).